A 140-amino-acid polypeptide reads, in one-letter code: Nucleoside diphosphate kinase (140 aa).

ATP-binding residues include lysine 11, phenylalanine 59, arginine 87, threonine 93, arginine 104, and asparagine 114. The Pros-phosphohistidine intermediate role is filled by histidine 117.

Belongs to the NDK family. In terms of assembly, homotetramer. It depends on Mg(2+) as a cofactor.

The protein resides in the cytoplasm. The catalysed reaction is a 2'-deoxyribonucleoside 5'-diphosphate + ATP = a 2'-deoxyribonucleoside 5'-triphosphate + ADP. The enzyme catalyses a ribonucleoside 5'-diphosphate + ATP = a ribonucleoside 5'-triphosphate + ADP. Functionally, major role in the synthesis of nucleoside triphosphates other than ATP. The ATP gamma phosphate is transferred to the NDP beta phosphate via a ping-pong mechanism, using a phosphorylated active-site intermediate. The polypeptide is Nucleoside diphosphate kinase (Brucella anthropi (strain ATCC 49188 / DSM 6882 / CCUG 24695 / JCM 21032 / LMG 3331 / NBRC 15819 / NCTC 12168 / Alc 37) (Ochrobactrum anthropi)).